Consider the following 702-residue polypeptide: Ribosomal RNA large subunit methyltransferase K/L (702 aa).

The THUMP domain occupies 43–154 (LVYQSLMWSR…KETASIALDL (112 aa)).

The protein belongs to the methyltransferase superfamily. RlmKL family.

Its subcellular location is the cytoplasm. The catalysed reaction is guanosine(2445) in 23S rRNA + S-adenosyl-L-methionine = N(2)-methylguanosine(2445) in 23S rRNA + S-adenosyl-L-homocysteine + H(+). It catalyses the reaction guanosine(2069) in 23S rRNA + S-adenosyl-L-methionine = N(2)-methylguanosine(2069) in 23S rRNA + S-adenosyl-L-homocysteine + H(+). Functionally, specifically methylates the guanine in position 2445 (m2G2445) and the guanine in position 2069 (m7G2069) of 23S rRNA. In Escherichia coli O6:K15:H31 (strain 536 / UPEC), this protein is Ribosomal RNA large subunit methyltransferase K/L.